Consider the following 224-residue polypeptide: Enolase-phosphatase E1 (224 aa).

It belongs to the HAD-like hydrolase superfamily. MasA/MtnC family. As to quaternary structure, monomer. Requires Mg(2+) as cofactor.

The enzyme catalyses 5-methylsulfanyl-2,3-dioxopentyl phosphate + H2O = 1,2-dihydroxy-5-(methylsulfanyl)pent-1-en-3-one + phosphate. It functions in the pathway amino-acid biosynthesis; L-methionine biosynthesis via salvage pathway; L-methionine from S-methyl-5-thio-alpha-D-ribose 1-phosphate: step 3/6. The protein operates within amino-acid biosynthesis; L-methionine biosynthesis via salvage pathway; L-methionine from S-methyl-5-thio-alpha-D-ribose 1-phosphate: step 4/6. Functionally, bifunctional enzyme that catalyzes the enolization of 2,3-diketo-5-methylthiopentyl-1-phosphate (DK-MTP-1-P) into the intermediate 2-hydroxy-3-keto-5-methylthiopentenyl-1-phosphate (HK-MTPenyl-1-P), which is then dephosphorylated to form the acireductone 1,2-dihydroxy-3-keto-5-methylthiopentene (DHK-MTPene). This Thioalkalivibrio sulfidiphilus (strain HL-EbGR7) protein is Enolase-phosphatase E1.